Consider the following 369-residue polypeptide: Protein disulfide-isomerase erp38 (369 aa).

The signal sequence occupies residues Met1 to Ala18. 2 consecutive Thioredoxin domains span residues Lys19–Gly130 and Val131–Gly251. Catalysis depends on nucleophile residues Cys50, Cys53, Cys170, and Cys173. 2 cysteine pairs are disulfide-bonded: Cys50/Cys53 and Cys170/Cys173. Residues Lys366 to Leu369 carry the Prevents secretion from ER motif.

It belongs to the protein disulfide isomerase family.

It localises to the endoplasmic reticulum lumen. The catalysed reaction is Catalyzes the rearrangement of -S-S- bonds in proteins.. The chain is Protein disulfide-isomerase erp38 (erp38) from Neurospora crassa (strain ATCC 24698 / 74-OR23-1A / CBS 708.71 / DSM 1257 / FGSC 987).